The sequence spans 34 residues: Potassium channel toxin alpha-KTx 6 hetlaxin (34 aa).

Intrachain disulfides connect C3/C24, C9/C29, C13/C31, and C19/C34. At C34 the chain carries Cysteine amide.

In terms of processing, contains 4 disulfide bonds. Expressed by the venom gland.

It localises to the secreted. In terms of biological role, binds to voltage-gated potassium channels Kv1.3/KCNA3 (IC(50)=0.48 uM) and Kv1.1/KCNA1 (IC(50)=6.7 uM) and inhibits channel activity. In Heterometrus laoticus (Thai giant scorpion), this protein is Potassium channel toxin alpha-KTx 6 hetlaxin.